We begin with the raw amino-acid sequence, 182 residues long: Probable RNA 2'-phosphotransferase (182 aa).

The protein belongs to the KptA/TPT1 family.

Its function is as follows. Removes the 2'-phosphate from RNA via an intermediate in which the phosphate is ADP-ribosylated by NAD followed by a presumed transesterification to release the RNA and generate ADP-ribose 1''-2''-cyclic phosphate (APPR&gt;P). May function as an ADP-ribosylase. The polypeptide is Probable RNA 2'-phosphotransferase (Herpetosiphon aurantiacus (strain ATCC 23779 / DSM 785 / 114-95)).